Consider the following 184-residue polypeptide: MQLQVARIGKPHGIRGEVTVQVLTDAPSERFVAGTEFVVEPASAGPLTIRSARWNKDILLLGFEEIADRNAAEVIRGAKLFIETEELSDEDDDEGWYEHELVGLEARVGSQVVGKVAALSTLPVQDLLTVTTEEGKEILIPFVDEIVPEVNVEGGYILITPPSGLFEINDENAKEPKDGAGDDA.

Residues 93–165 (DEGWYEHELV…YILITPPSGL (73 aa)) form the PRC barrel domain.

The protein belongs to the RimM family. In terms of assembly, binds ribosomal protein uS19.

The protein resides in the cytoplasm. Functionally, an accessory protein needed during the final step in the assembly of 30S ribosomal subunit, possibly for assembly of the head region. Essential for efficient processing of 16S rRNA. May be needed both before and after RbfA during the maturation of 16S rRNA. It has affinity for free ribosomal 30S subunits but not for 70S ribosomes. In Paenarthrobacter aurescens (strain TC1), this protein is Ribosome maturation factor RimM.